The following is a 133-amino-acid chain: Small ribosomal subunit protein bS18 (133 aa).

Positions 1 to 63 (MARPDMGGPK…GDEGGGRRGF (63 aa)) are disordered. A compositionally biased stretch (gly residues) spans 9–39 (PKTGGFGGPRSGGFGGGGGGGFGGGGFGGGR). Positions 40–59 (GGDRGDRGDRDDRGGDEGGG) are enriched in basic and acidic residues.

The protein belongs to the bacterial ribosomal protein bS18 family. In terms of assembly, part of the 30S ribosomal subunit. Forms a tight heterodimer with protein bS6.

In terms of biological role, binds as a heterodimer with protein bS6 to the central domain of the 16S rRNA, where it helps stabilize the platform of the 30S subunit. The sequence is that of Small ribosomal subunit protein bS18 from Anaeromyxobacter dehalogenans (strain 2CP-1 / ATCC BAA-258).